We begin with the raw amino-acid sequence, 264 residues long: uncharacterized protein (264 aa).

The next 6 membrane-spanning stretches (helical) occupy residues 1-21, 43-63, 95-115, 146-166, 181-201, and 215-235; these read MLLG…SVSL, FFGV…NGFV, VVGL…LSSL, IATW…LGGL, GWLA…QPFV, and IVAN…MFFP.

This sequence to M.pneumoniae MPN_308 C-terminal region.

The protein localises to the cell membrane. This is an uncharacterized protein from Mycoplasma pneumoniae (strain ATCC 29342 / M129 / Subtype 1) (Mycoplasmoides pneumoniae).